A 667-amino-acid chain; its full sequence is UvrABC system protein B (667 aa).

Residues 25–180 form the Helicase ATP-binding domain; the sequence is DSLQNQHRFQ…LLRALVSVQY (156 aa). 38–45 is an ATP binding site; sequence GATGTGKT. Residues 91–114 carry the Beta-hairpin motif; the sequence is YYDYYQPEAYIPVSDTYIEKSSSI. Residues 429–595 form the Helicase C-terminal domain; it reads QVDDLLGEIK…PIVKRSSNSI (167 aa). In terms of domain architecture, UVR spans 626–661; the sequence is PELIQQLEAQMKEAAKNLEFESAAKYRDRIKQLRDK.

The protein belongs to the UvrB family. Forms a heterotetramer with UvrA during the search for lesions. Interacts with UvrC in an incision complex.

Its subcellular location is the cytoplasm. Its function is as follows. The UvrABC repair system catalyzes the recognition and processing of DNA lesions. A damage recognition complex composed of 2 UvrA and 2 UvrB subunits scans DNA for abnormalities. Upon binding of the UvrA(2)B(2) complex to a putative damaged site, the DNA wraps around one UvrB monomer. DNA wrap is dependent on ATP binding by UvrB and probably causes local melting of the DNA helix, facilitating insertion of UvrB beta-hairpin between the DNA strands. Then UvrB probes one DNA strand for the presence of a lesion. If a lesion is found the UvrA subunits dissociate and the UvrB-DNA preincision complex is formed. This complex is subsequently bound by UvrC and the second UvrB is released. If no lesion is found, the DNA wraps around the other UvrB subunit that will check the other stand for damage. The sequence is that of UvrABC system protein B from Microcystis aeruginosa (strain NIES-843 / IAM M-2473).